The sequence spans 971 residues: Nitrogen regulatory protein areA (971 aa).

Disordered regions lie at residues 39–61, 146–169, 262–307, 390–416, and 587–691; these read IHNA…DASA, HKEE…DAGS, QPAH…VNST, SASM…NVST, and DNNG…GNAP. Positions 42–59 are enriched in polar residues; that stretch reads APTQRTXNSNRIPNSRDA. Basic and acidic residues predominate over residues 146–159; it reads HKEEQQQRQDEADA. 2 stretches are compositionally biased toward polar residues: residues 262-274 and 297-307; these read QPAH…SEFN and FSPQVPAVNST. The segment covering 390–400 has biased composition (low complexity); the sequence is SASMSNNNNNS. 2 stretches are compositionally biased toward polar residues: residues 597 to 606 and 632 to 645; these read LERSQSQSFR and NGFE…QSSP. 2 stretches are compositionally biased toward low complexity: residues 654 to 663 and 680 to 691; these read SGFSSVAPSR and AAAGNGNDGNAP. Residues 694 to 718 form a GATA-type zinc finger; that stretch reads CTNCFTQTTPLWRRNPEGQPLCNAC. The interval 742 to 918 is disordered; it reads NRGSGTNVPV…PFGSSAGLSS (177 aa). A compositionally biased stretch (polar residues) spans 744 to 794; that stretch reads GSGTNVPVGGSSTRSKKTASTLNSRKNSTLSMSTATANSTKPNSSNPTPRV. Positions 796–826 are enriched in low complexity; it reads TPPATSQPPSSKDVDSPVSGTTSGANTAGST. A compositionally biased stretch (gly residues) spans 832 to 845; sequence GGPGPSSGAVGGKG. The segment covering 863-875 has biased composition (polar residues); that stretch reads SSMSMQRPATASS. Residues 892-918 show a composition bias toward low complexity; the sequence is SMDIDSPDSTSSIDGPRPFGSSAGLSS.

It is found in the nucleus. In terms of biological role, major nitrogen regulatory protein. Positively acting regulatory gene of nitrogen metabolite repression. The polypeptide is Nitrogen regulatory protein areA (AREA) (Fusarium fujikuroi (Bakanae and foot rot disease fungus)).